Consider the following 181-residue polypeptide: ATP synthase subunit b, chloroplastic (181 aa).

The helical transmembrane segment at 31–50 (NVLNIAILLSGVVYLGRNFL) threads the bilayer.

It belongs to the ATPase B chain family. As to quaternary structure, F-type ATPases have 2 components, F(1) - the catalytic core - and F(0) - the membrane proton channel. F(1) has five subunits: alpha(3), beta(3), gamma(1), delta(1), epsilon(1). F(0) has four main subunits: a(1), b(1), b'(1) and c(10-14). The alpha and beta chains form an alternating ring which encloses part of the gamma chain. F(1) is attached to F(0) by a central stalk formed by the gamma and epsilon chains, while a peripheral stalk is formed by the delta, b and b' chains.

It localises to the plastid. Its subcellular location is the chloroplast thylakoid membrane. Functionally, f(1)F(0) ATP synthase produces ATP from ADP in the presence of a proton or sodium gradient. F-type ATPases consist of two structural domains, F(1) containing the extramembraneous catalytic core and F(0) containing the membrane proton channel, linked together by a central stalk and a peripheral stalk. During catalysis, ATP synthesis in the catalytic domain of F(1) is coupled via a rotary mechanism of the central stalk subunits to proton translocation. Its function is as follows. Component of the F(0) channel, it forms part of the peripheral stalk, linking F(1) to F(0). This Rhodomonas salina (Cryptomonas salina) protein is ATP synthase subunit b, chloroplastic.